The primary structure comprises 276 residues: Formamidopyrimidine-DNA glycosylase (276 aa).

Pro2 serves as the catalytic Schiff-base intermediate with DNA. Glu3 acts as the Proton donor in catalysis. Lys58 serves as the catalytic Proton donor; for beta-elimination activity. Residues His94, Arg112, and Arg157 each contribute to the DNA site. An FPG-type zinc finger spans residues 242–276 (FVYDRAGQPCRVCGTPIKQIVQGQRSTYYCPTCQR). The active-site Proton donor; for delta-elimination activity is Arg266.

Belongs to the FPG family. Monomer. The cofactor is Zn(2+).

It catalyses the reaction Hydrolysis of DNA containing ring-opened 7-methylguanine residues, releasing 2,6-diamino-4-hydroxy-5-(N-methyl)formamidopyrimidine.. It carries out the reaction 2'-deoxyribonucleotide-(2'-deoxyribose 5'-phosphate)-2'-deoxyribonucleotide-DNA = a 3'-end 2'-deoxyribonucleotide-(2,3-dehydro-2,3-deoxyribose 5'-phosphate)-DNA + a 5'-end 5'-phospho-2'-deoxyribonucleoside-DNA + H(+). Involved in base excision repair of DNA damaged by oxidation or by mutagenic agents. Acts as a DNA glycosylase that recognizes and removes damaged bases. Has a preference for oxidized purines, such as 7,8-dihydro-8-oxoguanine (8-oxoG). Has AP (apurinic/apyrimidinic) lyase activity and introduces nicks in the DNA strand. Cleaves the DNA backbone by beta-delta elimination to generate a single-strand break at the site of the removed base with both 3'- and 5'-phosphates. In Paraburkholderia phymatum (strain DSM 17167 / CIP 108236 / LMG 21445 / STM815) (Burkholderia phymatum), this protein is Formamidopyrimidine-DNA glycosylase.